Reading from the N-terminus, the 347-residue chain is NADH-ubiquinone oxidoreductase chain 2 (347 aa).

The next 9 membrane-spanning stretches (helical) occupy residues 3-23, 25-45, 67-87, 150-170, 178-198, 201-221, 237-257, 274-294, and 323-343; these read PPILIIIMFTVISGTIMVLMS, HWLMIWIGFEMNMLAIIPILM, SMLLMLGIIMNLLLTGQWAVL, NPHLLMTMALMSVLVGGWGGL, ILAYSSIAHMGWMIAVMTYSP, MLLNLSIYITMTLGTFMLFMF, LPLITSLILIIMLSLGGLPPL, NMIITTMLMTITALLNLYFYM, and MTMLPPLIVISTMLLPLTPMM.

Belongs to the complex I subunit 2 family. As to quaternary structure, core subunit of respiratory chain NADH dehydrogenase (Complex I) which is composed of 45 different subunits. Interacts with TMEM242.

The protein localises to the mitochondrion inner membrane. The enzyme catalyses a ubiquinone + NADH + 5 H(+)(in) = a ubiquinol + NAD(+) + 4 H(+)(out). Its function is as follows. Core subunit of the mitochondrial membrane respiratory chain NADH dehydrogenase (Complex I) which catalyzes electron transfer from NADH through the respiratory chain, using ubiquinone as an electron acceptor. Essential for the catalytic activity and assembly of complex I. In Mustela kathiah (Yellow-bellied weasel), this protein is NADH-ubiquinone oxidoreductase chain 2.